Consider the following 257-residue polypeptide: MQKLESRGFILFNRNYRENDKLVKIFTKQAGKRMFFVRGGGSGKLSAVIQPLNIAEFMMTVNDEGLSFIEDYSQAESFKEITSDIFKLSYATYLAALTDAAIADGVVDAQLFAFLEKTLVLMEEGLDYEILTNIFEIQVLDRFGVRLNFHECVFCHRVGLPFDFSYKFSGLLCPNHYEEDERRSHLDPNVPYLLDRFQGLSFEELRSISVKDEMKRKLRQFIDELYDNYVGIHLKSKKFIDNLNSWGHIMSKEDNAD.

This sequence belongs to the RecO family.

Involved in DNA repair and RecF pathway recombination. The polypeptide is DNA repair protein RecO (Streptococcus thermophilus (strain CNRZ 1066)).